The chain runs to 932 residues: Protocadherin gamma-A9 (932 aa).

The signal sequence occupies residues 1–28 (MAAPTKCQLRGRLVLLCSLLGMLWEARA). Cadherin domains follow at residues 29 to 133 (SQIR…APKF), 134 to 242 (QAES…APVF), 243 to 347 (AQRI…RPEV), 348 to 452 (TITS…PPAF), 453 to 562 (SQAS…APEI), and 570 to 683 (DGST…IPAD). Residues 29 to 692 (SQIRYSVPEE…DLEASDLTLY (664 aa)) are Extracellular-facing. 2 N-linked (GlcNAc...) asparagine glycosylation sites follow: Asn-47 and Asn-127. Asn-389, Asn-419, and Asn-545 each carry an N-linked (GlcNAc...) asparagine glycan. A helical transmembrane segment spans residues 693–713 (LVVAVAVVSCVFLTFVITLLA). The Cytoplasmic segment spans residues 714–932 (LRLRHWHSSH…KKKSGKKEKK (219 aa)). 2 disordered regions span residues 803–841 (DTPL…WPNN) and 902–932 (ATLT…KEKK). Polar residues predominate over residues 816 to 841 (WRFSQAQRPGTSGSQNGDDTGTWPNN). Positions 922–932 (NKKKSGKKEKK) are enriched in basic residues.

Its subcellular location is the cell membrane. Potential calcium-dependent cell-adhesion protein. May be involved in the establishment and maintenance of specific neuronal connections in the brain. The polypeptide is Protocadherin gamma-A9 (PCDHGA9) (Pan troglodytes (Chimpanzee)).